A 592-amino-acid polypeptide reads, in one-letter code: Protein alan shepard (592 aa).

Residues 1–68 (MGGPHHQHQQ…ASVAAAPPTP (68 aa)) are disordered. The segment covering 18–28 (VGGGNGHGGGA) has biased composition (gly residues). The segment covering 36–54 (PNSQQLPPQMPRSQNYANG) has biased composition (polar residues). Low complexity predominate over residues 55-64 (SSSAASVAAA). A phosphotyrosine mark is found at Tyr-124 and Tyr-140. The disordered stretch occupies residues 162–224 (PATTTYGQRV…AQNQNQQGGE (63 aa)). The segment covering 176–224 (SPSNTNSSSSSNTGSQSGTLSTSLSNTTNTNTTMGPNGTAQNQNQQGGE) has biased composition (low complexity). RRM domains are found at residues 229–307 (TNLY…IWVL) and 319–398 (TNLY…FADG). A disordered region spans residues 565–592 (PMTDSEQASTAASPDEAYTQYPHQAAPK).

Has a role in the perception of gravity. In Drosophila mojavensis (Fruit fly), this protein is Protein alan shepard.